The primary structure comprises 351 residues: UDP-3-O-acylglucosamine N-acyltransferase (351 aa).

The active-site Proton acceptor is His-257.

This sequence belongs to the transferase hexapeptide repeat family. LpxD subfamily. Homotrimer.

It catalyses the reaction a UDP-3-O-[(3R)-3-hydroxyacyl]-alpha-D-glucosamine + a (3R)-hydroxyacyl-[ACP] = a UDP-2-N,3-O-bis[(3R)-3-hydroxyacyl]-alpha-D-glucosamine + holo-[ACP] + H(+). The protein operates within bacterial outer membrane biogenesis; LPS lipid A biosynthesis. In terms of biological role, catalyzes the N-acylation of UDP-3-O-acylglucosamine using 3-hydroxyacyl-ACP as the acyl donor. Is involved in the biosynthesis of lipid A, a phosphorylated glycolipid that anchors the lipopolysaccharide to the outer membrane of the cell. This is UDP-3-O-acylglucosamine N-acyltransferase from Methylorubrum extorquens (strain PA1) (Methylobacterium extorquens).